The following is a 212-amino-acid chain: Peptidyl-prolyl cis-trans isomerase-like 3 (212 aa).

Residues 1 to 198 (MSVTLHTTHG…EGEEGGYEAI (198 aa)) enclose the PPIase cyclophilin-type domain.

The protein belongs to the cyclophilin-type PPIase family. PPIL3 subfamily.

The catalysed reaction is [protein]-peptidylproline (omega=180) = [protein]-peptidylproline (omega=0). PPIases accelerate the folding of proteins. It catalyzes the cis-trans isomerization of proline imidic peptide bonds in oligopeptides. The sequence is that of Peptidyl-prolyl cis-trans isomerase-like 3 (cyp10) from Aspergillus fumigatus (strain ATCC MYA-4609 / CBS 101355 / FGSC A1100 / Af293) (Neosartorya fumigata).